A 764-amino-acid chain; its full sequence is Protein Lines homolog 1 (764 aa).

Disordered stretches follow at residues 615-668 (SQSQ…TSLC) and 682-702 (WEEQ…SSPF). The segment covering 645-654 (DSSEASEEET) has biased composition (acidic residues). Ser-650 bears the Phosphoserine mark. The segment covering 658–668 (HLANSKQTSLC) has biased composition (polar residues). Low complexity predominate over residues 691-702 (EPLLSAESSSPF).

Belongs to the protein lines family.

This chain is Protein Lines homolog 1, found in Mus musculus (Mouse).